Here is a 309-residue protein sequence, read N- to C-terminus: Oxidoreductase NAD-binding domain-containing protein 1 (309 aa).

The signal sequence occupies residues 1–14 (MVVVIPRLLRGSLG). In terms of domain architecture, FAD-binding FR-type spans 47-161 (HLERTADVVR…VGGEFFFDPK (115 aa)). 175 to 180 (GVGINP) contacts NAD(+).

This Bos taurus (Bovine) protein is Oxidoreductase NAD-binding domain-containing protein 1 (OXNAD1).